The primary structure comprises 348 residues: Rhodopsin (348 aa).

The Extracellular portion of the chain corresponds to 1–33; that stretch reads TEGPYFYVPMVNTTGIVRSPYEYPQYYLVNPAA. The N-linked (GlcNAc...) asparagine glycan is linked to asparagine 12. Residues 34–58 traverse the membrane as a helical segment; sequence YAVLGAYMFFLIILGFPINFLTLYV. Over 59–70 the chain is Cytoplasmic; that stretch reads TLEHKKLRTPLN. The chain crosses the membrane as a helical span at residues 71–93; it reads YILLNLAVADLFMVIGGFTTTMY. The Extracellular segment spans residues 94–107; sequence SSMHGYFVLGRLGC. Residues cysteine 107 and cysteine 184 are joined by a disulfide bond. A helical transmembrane segment spans residues 108–130; the sequence is NLEGFSATLGGMISLWSLAVLAI. The 'Ionic lock' involved in activated form stabilization signature appears at 131–133; it reads ERW. Residues 131–149 lie on the Cytoplasmic side of the membrane; sequence ERWVVVCKPISNFRFGENH. The helical transmembrane segment at 150-170 threads the bilayer; it reads AIMGVSLTWTMALACTVPPLV. Residues 171 to 199 lie on the Extracellular side of the membrane; sequence GWSRYIPEGMQCSCGIDYYTRAEGFNNES. Asparagine 197 carries N-linked (GlcNAc...) asparagine glycosylation. The chain crosses the membrane as a helical span at residues 200–221; the sequence is FVLYMFFCHFMVPLIIIFFCYG. Topologically, residues 222–249 are cytoplasmic; sequence RLLCAVKEAAAAQQESETTQRAEREVTR. Residues 250–271 traverse the membrane as a helical segment; sequence MVILMVIGYLVCWLPYASVAWF. At 272-283 the chain is on the extracellular side; it reads IFTHQGSEFGPL. A helical transmembrane segment spans residues 284 to 305; sequence FMTIPAFFAKSSSIYNPVIYIC. Lysine 293 carries the N6-(retinylidene)lysine modification. The Cytoplasmic portion of the chain corresponds to 306 to 348; that stretch reads MNKQFRNCMITTLFCGKNPFEGEEEGASSTKTEASSASSVSPA. Residue cysteine 320 is the site of S-palmitoyl cysteine attachment. A disordered region spans residues 327–348; sequence GEEEGASSTKTEASSASSVSPA. Positions 332–348 are enriched in low complexity; sequence ASSTKTEASSASSVSPA.

It belongs to the G-protein coupled receptor 1 family. Opsin subfamily. In terms of processing, phosphorylated on some or all of the serine and threonine residues present in the C-terminal region. Contains one covalently linked retinal chromophore.

The protein localises to the membrane. The protein resides in the cell projection. It is found in the cilium. It localises to the photoreceptor outer segment. Functionally, photoreceptor required for image-forming vision at low light intensity. While most salt water fish species use retinal as chromophore, most freshwater fish use 3-dehydroretinal, or a mixture of retinal and 3-dehydroretinal. Light-induced isomerization of 11-cis to all-trans retinal triggers a conformational change that activates signaling via G-proteins. Subsequent receptor phosphorylation mediates displacement of the bound G-protein alpha subunit by arrestin and terminates signaling. The protein is Rhodopsin (rho) of Neoniphon argenteus (Clearfin squirrelfish).